We begin with the raw amino-acid sequence, 129 residues long: Small ribosomal subunit protein uS8 (129 aa).

Belongs to the universal ribosomal protein uS8 family. Part of the 30S ribosomal subunit.

Its function is as follows. One of the primary rRNA binding proteins, it binds directly to 16S rRNA central domain where it helps coordinate assembly of the platform of the 30S subunit. This is Small ribosomal subunit protein uS8 from Methanothrix thermoacetophila (strain DSM 6194 / JCM 14653 / NBRC 101360 / PT) (Methanosaeta thermophila).